We begin with the raw amino-acid sequence, 426 residues long: Probable histidine--tRNA ligase (426 aa).

Belongs to the class-II aminoacyl-tRNA synthetase family. Homodimer.

It is found in the cytoplasm. It carries out the reaction tRNA(His) + L-histidine + ATP = L-histidyl-tRNA(His) + AMP + diphosphate + H(+). This is Probable histidine--tRNA ligase (hisS) from Tropheryma whipplei (strain TW08/27) (Whipple's bacillus).